The following is a 2701-amino-acid chain: Centromere-associated protein E (2701 aa).

The 324-residue stretch at Ala6–Met329 folds into the Kinesin motor domain. Position 86–93 (Gly86–Thr93) interacts with ATP. The stretch at Asn336–Arg2590 forms a coiled coil. Phosphoserine is present on residues Ser611 and Ser2083. Residues Lys2126–Lys2476 form a kinetochore-binding domain region. A disordered region spans residues Ser2355 to Thr2376. The residue at position 2389 (Ser2389) is a Phosphoserine. Residues Gln2508 to Pro2527 are compositionally biased toward polar residues. Disordered stretches follow at residues Gln2508 to Gly2533 and Lys2588 to Gln2701. Positions Gln2510–Cys2698 are globular autoinhibitory domain. The segment covering Lys2588–Val2600 has biased composition (basic and acidic residues). The segment covering Thr2601–Gln2625 has biased composition (polar residues). Over residues Cys2626 to Pro2640 the composition is skewed to basic and acidic residues. Phosphoserine occurs at positions 2639, 2647, and 2651. A Cysteine methyl ester modification is found at Cys2698. Cys2698 is lipidated: S-farnesyl cysteine. A propeptide spans Lys2699–Gln2701 (removed in mature form).

This sequence belongs to the TRAFAC class myosin-kinesin ATPase superfamily. Kinesin family. As to quaternary structure, monomer. Interacts with CENPF. Interacts with BUB1B. Interacts with SEPT7. Interacts with KIF18A. Interacts with PRC1. Interacts with NUF2; this interaction determines kinetochore localization. Interacts with SKAP; this interaction greatly favors SKAP binding to microtubules. Interacts with TRAPPC12. Interacts with CTCF. The C-terminal inhibitory domain is phosphorylated. Phosphorylation relieves autoinhibition of the kinetochore motor. In terms of processing, sumoylated with SUMO2 and SUMO3. The sumoylation mediates the association to the kinetochore.

The protein resides in the chromosome. Its subcellular location is the centromere. It localises to the kinetochore. The protein localises to the cytoplasm. It is found in the cytoskeleton. The protein resides in the spindle. Its function is as follows. Microtubule plus-end-directed kinetochore motor which plays an important role in chromosome congression, microtubule-kinetochore conjugation and spindle assembly checkpoint activation. Drives chromosome congression (alignment of chromosomes at the spindle equator resulting in the formation of the metaphase plate) by mediating the lateral sliding of polar chromosomes along spindle microtubules towards the spindle equator and by aiding the establishment and maintenance of connections between kinetochores and spindle microtubules. The transport of pole-proximal chromosomes towards the spindle equator is favored by microtubule tracks that are detyrosinated. Acts as a processive bi-directional tracker of dynamic microtubule tips; after chromosomes have congressed, continues to play an active role at kinetochores, enhancing their links with dynamic microtubule ends. Suppresses chromosome congression in NDC80-depleted cells and contributes positively to congression only when microtubules are stabilized. Plays an important role in the formation of stable attachments between kinetochores and spindle microtubules The stabilization of kinetochore-microtubule attachment also requires CENPE-dependent localization of other proteins to the kinetochore including BUB1B, MAD1 and MAD2. Plays a role in spindle assembly checkpoint activation (SAC) via its interaction with BUB1B resulting in the activation of its kinase activity, which is important for activating SAC. Necessary for the mitotic checkpoint signal at individual kinetochores to prevent aneuploidy due to single chromosome loss. This Homo sapiens (Human) protein is Centromere-associated protein E (CENPE).